Reading from the N-terminus, the 292-residue chain is Tumor necrosis factor receptor type 1-associated DEATH domain protein (292 aa).

The Nuclear export signal signature appears at 148–164 (LRDDEIAELDQQLQSQA). Positions 199–289 (AAGDLQRFSN…SLAENILDIQ (91 aa)) constitute a Death domain. Residues 215–228 (RKVGRALGKNCRAL) carry the Nuclear localization signal motif.

In terms of assembly, heterodimer with tnfrsf1a.

It localises to the nucleus. The protein resides in the cytoplasm. Its subcellular location is the cytoskeleton. Its function is as follows. Adapter molecule for tnfrsf1a that specifically associates with the cytoplasmic domain of activated tnfrsf1a mediating its interaction with fadd. This is Tumor necrosis factor receptor type 1-associated DEATH domain protein (tradd) from Oncorhynchus mykiss (Rainbow trout).